A 201-amino-acid chain; its full sequence is Recombination protein RecR (201 aa).

The segment at 57–72 (CADCRTFTEQDVCNIC) adopts a C4-type zinc-finger fold. In terms of domain architecture, Toprim spans 81–176 (GQICVVESPA…EASRIAHGVP (96 aa)).

Belongs to the RecR family.

Functionally, may play a role in DNA repair. It seems to be involved in an RecBC-independent recombinational process of DNA repair. It may act with RecF and RecO. In Salmonella agona (strain SL483), this protein is Recombination protein RecR.